The chain runs to 381 residues: Protein kinase gsk31 (381 aa).

Residues Tyr25–Phe309 form the Protein kinase domain. ATP-binding positions include Leu31–Val39 and Lys54. Asp150 functions as the Proton acceptor in the catalytic mechanism. Ser184 bears the Phosphoserine mark. Tyr185 is subject to Phosphotyrosine.

It belongs to the protein kinase superfamily. CMGC Ser/Thr protein kinase family. GSK-3 subfamily.

The catalysed reaction is L-seryl-[protein] + ATP = O-phospho-L-seryl-[protein] + ADP + H(+). It carries out the reaction L-threonyl-[protein] + ATP = O-phospho-L-threonyl-[protein] + ADP + H(+). This Schizosaccharomyces pombe (strain 972 / ATCC 24843) (Fission yeast) protein is Protein kinase gsk31 (gsk31).